The chain runs to 314 residues: MASVFLPALGGVAVCGGTHGNELSGVYLVQEMERQRKEKGDGVWPIPVTTVLSNPRAVKECRRYIDTDMNRCFSRDTLSTPITDSSPYEVRRAQELNNQLGPKESTGAIDMICDLHNTTSNMGLTLIHYTTSDWATLHICKYLQTKITKVPVRVMVLDVPYSDAYSLESVSKHGFSIEVGPQPHGVVRADIYVIMKEAVDLTIDWIHKFNSGTVFEGGDVEAFKIIKSVDYPRDPVTRSLNAAVHPQLQDRDFCLLKRGDPLFLSFSGETVKYEEEEPLHPLFINECAYYEKGIAFHLAKRMRLTIPAVQVQKD.

2 residues coordinate Zn(2+): His19 and Glu22. Substrate is bound by residues Arg63 and 70–71; that span reads NR. Position 116 (His116) interacts with Zn(2+). Substrate contacts are provided by Glu178 and Tyr289.

It belongs to the AspA/AstE family. Aspartoacylase subfamily. Homotetramer. The cofactor is Zn(2+).

It localises to the apical cell membrane. It is found in the cytoplasm. The enzyme catalyses an N-acyl-aromatic L-alpha-amino acid + H2O = an aromatic L-alpha-amino acid + a carboxylate. It carries out the reaction an N-acetyl-L-cysteine-S-conjugate + H2O = an S-substituted L-cysteine + acetate. Plays an important role in deacetylating mercapturic acids in kidney proximal tubules. The sequence is that of N-acyl-aromatic-L-amino acid amidohydrolase (carboxylate-forming) B (acy3.2) from Danio rerio (Zebrafish).